A 249-amino-acid polypeptide reads, in one-letter code: (2S)-[(R)-hydroxy(phenyl)methyl]succinyl-CoA dehydrogenase subunit BbsC (249 aa).

It belongs to the short-chain dehydrogenases/reductases (SDR) family. Heterotetramer composed of 2 inactive BbsC subunits and 2 active BbsD subunits.

It participates in xenobiotic degradation; toluene degradation. Its function is as follows. Involved in an anaerobic toluene degradation pathway. Catalytically inactive subunit, which is probably required for the structural and/or regulatory integrity of the catalytic subunit BbsD. This subunit cannot bind NAD(+) or substrate. This chain is (2S)-[(R)-hydroxy(phenyl)methyl]succinyl-CoA dehydrogenase subunit BbsC, found in Thauera aromatica.